Reading from the N-terminus, the 216-residue chain is uncharacterized protein (216 aa).

This is an uncharacterized protein from Archaeoglobus fulgidus (strain ATCC 49558 / DSM 4304 / JCM 9628 / NBRC 100126 / VC-16).